A 347-amino-acid polypeptide reads, in one-letter code: S-adenosylmethionine:tRNA ribosyltransferase-isomerase (347 aa).

This sequence belongs to the QueA family. As to quaternary structure, monomer.

The protein resides in the cytoplasm. The enzyme catalyses 7-aminomethyl-7-carbaguanosine(34) in tRNA + S-adenosyl-L-methionine = epoxyqueuosine(34) in tRNA + adenine + L-methionine + 2 H(+). The protein operates within tRNA modification; tRNA-queuosine biosynthesis. Transfers and isomerizes the ribose moiety from AdoMet to the 7-aminomethyl group of 7-deazaguanine (preQ1-tRNA) to give epoxyqueuosine (oQ-tRNA). This Gluconobacter oxydans (strain 621H) (Gluconobacter suboxydans) protein is S-adenosylmethionine:tRNA ribosyltransferase-isomerase.